The primary structure comprises 699 residues: tRNA(Met) cytidine acetyltransferase TmcA (699 aa).

ATP contacts are provided by residues Gln178, 200–209, and Arg322; that span reads GRGKSTLAGM. Positions 408-547 constitute an N-acetyltransferase domain; it reads MHIASAQVAG…SGCYSAMAIL (140 aa). Residues 475–477 and 482–488 each bind acetyl-CoA; these read IAV and RRQGIGR.

The protein belongs to the RNA cytidine acetyltransferase family. TmcA subfamily.

The protein localises to the cytoplasm. The catalysed reaction is cytidine(34) in elongator tRNA(Met) + acetyl-CoA + ATP + H2O = N(4)-acetylcytidine(34) in elongator tRNA(Met) + ADP + phosphate + CoA + H(+). Its function is as follows. Catalyzes the formation of N(4)-acetylcytidine (ac(4)C) at the wobble position of tRNA(Met), by using acetyl-CoA as an acetyl donor and ATP (or GTP). The protein is tRNA(Met) cytidine acetyltransferase TmcA of Pectobacterium atrosepticum (strain SCRI 1043 / ATCC BAA-672) (Erwinia carotovora subsp. atroseptica).